The following is a 283-amino-acid chain: uncharacterized protein (283 aa).

This is an uncharacterized protein from Caenorhabditis elegans.